A 275-amino-acid polypeptide reads, in one-letter code: Hydroxyethylthiazole kinase (275 aa).

Met50 is a binding site for substrate. Positions 126 and 171 each coordinate ATP. Residue Ala200 participates in substrate binding.

The protein belongs to the Thz kinase family. Requires Mg(2+) as cofactor.

It catalyses the reaction 5-(2-hydroxyethyl)-4-methylthiazole + ATP = 4-methyl-5-(2-phosphooxyethyl)-thiazole + ADP + H(+). It participates in cofactor biosynthesis; thiamine diphosphate biosynthesis; 4-methyl-5-(2-phosphoethyl)-thiazole from 5-(2-hydroxyethyl)-4-methylthiazole: step 1/1. Its function is as follows. Catalyzes the phosphorylation of the hydroxyl group of 4-methyl-5-beta-hydroxyethylthiazole (THZ). This is Hydroxyethylthiazole kinase from Acinetobacter baumannii (strain ATCC 17978 / DSM 105126 / CIP 53.77 / LMG 1025 / NCDC KC755 / 5377).